A 152-amino-acid polypeptide reads, in one-letter code: Large ribosomal subunit protein bL9 (152 aa).

Belongs to the bacterial ribosomal protein bL9 family.

In terms of biological role, binds to the 23S rRNA. This chain is Large ribosomal subunit protein bL9, found in Synechococcus sp. (strain CC9605).